A 730-amino-acid chain; its full sequence is MMRHDRNVTEIDAETRPDENLWHSGDSAVGAPPAATPAAMTDLPEDRYLNRELSWLDFNARVLALADDNSLPLLERAKFLAIFASNLDEFYMVRVAGLKRRDEMGLSVRSADGLTPRKQLALIGEHTQRIATRHARVFLDSVRPALAEEGIHIVTWADLDQAERDELSTYFTEQVFPVLTPLAVDPAHPFPFVSGLSLNLAVMVRQTEDGGQHFARVKVPNNVDRFVELAAPRAGAEGENRGVVRFLPMEELIAAFLPLLFPGMEIVEHHAFRITRNADMEVEEDRDEDLLQALERELARRRFGPPVRLEIADDMTEGMLELLLRELDVHPGDVIEVPGLLDLSSLRQIYDLDRPALKDPAFVPDTHPAFADRESPKSIFATLREGDVLVHHPYDSFSTSVQRFIQQAAADPNVLAIKQTLYRTSGDSPIVRALIEAAEAGKQAVALVEIKARFDEQANIRWARALEQAGVHVVYGLVGLKTHCKTCLVVRREGSAIRRYCHIGTGNYNSKTARLYEDVGLLTAAPDIGADLTDLFNSLTGYSRKVSYRNLLVAPHGIRTGIIERVEREIAAHRERGQGRIRLKMNALVDEQVIDSLYRASQAGVRVEVVVRGICALRPGVQGYSENIFVRSILGRFLEHSRIIHFRNINEFWIGSADMMHRNLDRRVEVLAQVKDPKLTAQLDELFESALDPSTRCWELGPDGQWTPSPQEGHTVRDHQVSLMERHRSP.

The segment covering 1-21 (MMRHDRNVTEIDAETRPDENL) has biased composition (basic and acidic residues). Positions 1-39 (MMRHDRNVTEIDAETRPDENLWHSGDSAVGAPPAATPAA) are disordered. An ATP-binding site is contributed by asparagine 86. Positions 423 and 453 each coordinate Mg(2+). Catalysis depends on histidine 483, which acts as the Phosphohistidine intermediate. Tyrosine 516, arginine 612, and histidine 640 together coordinate ATP.

It belongs to the polyphosphate kinase 1 (PPK1) family. Mg(2+) serves as cofactor. Post-translationally, an intermediate of this reaction is the autophosphorylated ppk in which a phosphate is covalently linked to a histidine residue through a N-P bond.

The catalysed reaction is [phosphate](n) + ATP = [phosphate](n+1) + ADP. Catalyzes the reversible transfer of the terminal phosphate of ATP to form a long-chain polyphosphate (polyP). This is Polyphosphate kinase from Mycobacterium avium (strain 104).